We begin with the raw amino-acid sequence, 539 residues long: Dihydrolipoyllysine-residue acetyltransferase component 3 of pyruvate dehydrogenase complex, mitochondrial (539 aa).

Residues 1–102 (MAYASRIINH…SCLMQSARGF (102 aa)) constitute a mitochondrion transit peptide. The Lipoyl-binding domain maps to 111–187 (HQEIGMPSLS…QVGEVIAITV (77 aa)). Residue Lys152 is modified to N6-lipoyllysine. Residues 195–247 (KFKDYTPSSTADAAPTKAEPTPAPPKEEKVKQPSSPPEPKASKPSTPPTGDRV) are disordered. Residues 204–214 (TADAAPTKAEP) show a composition bias toward low complexity. Residues 248-285 (FASPLARKLAEDNNVPLSDIEGTGPEGRIVKADIDEYL) enclose the Peripheral subunit-binding (PSBD) domain. Active-site residues include His512 and Asp516.

It belongs to the 2-oxoacid dehydrogenase family. Requires (R)-lipoate as cofactor.

It is found in the mitochondrion matrix. It catalyses the reaction N(6)-[(R)-dihydrolipoyl]-L-lysyl-[protein] + acetyl-CoA = N(6)-[(R)-S(8)-acetyldihydrolipoyl]-L-lysyl-[protein] + CoA. Its function is as follows. The pyruvate dehydrogenase complex catalyzes the overall conversion of pyruvate to acetyl-CoA and CO(2). It contains multiple copies of three enzymatic components: pyruvate dehydrogenase (E1), dihydrolipoamide acetyltransferase (E2) and lipoamide dehydrogenase (E3). This chain is Dihydrolipoyllysine-residue acetyltransferase component 3 of pyruvate dehydrogenase complex, mitochondrial, found in Arabidopsis thaliana (Mouse-ear cress).